A 140-amino-acid chain; its full sequence is Gonadotropin subunit beta-2 (140 aa).

A signal peptide spans 1–24 (MSVYPECTWLLFVCLCHLLVSAGG). Intrachain disulfides connect Cys30-Cys78, Cys44-Cys93, Cys47-Cys131, Cys55-Cys109, Cys59-Cys111, and Cys114-Cys121. Asn34 is a glycosylation site (N-linked (GlcNAc...) asparagine).

It belongs to the glycoprotein hormones subunit beta family. Heterodimer of an alpha and a beta chain.

It localises to the secreted. Its function is as follows. Involved in gametogenesis and steroidogenesis. The protein is Gonadotropin subunit beta-2 (cgbb) of Anguilla anguilla (European freshwater eel).